Consider the following 367-residue polypeptide: Ferrochelatase (367 aa).

Positions 226 and 307 each coordinate Fe cation.

It belongs to the ferrochelatase family.

The protein resides in the cytoplasm. It carries out the reaction heme b + 2 H(+) = protoporphyrin IX + Fe(2+). The protein operates within porphyrin-containing compound metabolism; protoheme biosynthesis; protoheme from protoporphyrin-IX: step 1/1. Catalyzes the ferrous insertion into protoporphyrin IX. The protein is Ferrochelatase of Burkholderia mallei (strain NCTC 10247).